A 397-amino-acid polypeptide reads, in one-letter code: ATP-dependent RNA helicase RhlB (397 aa).

Residues 9 to 37 (TRFHDFNLAPSLMHAIHDLGFPYCTPIQA) carry the Q motif motif. The Helicase ATP-binding domain maps to 40–220 (LGFTLRGQDA…KQWTVDPAIV (181 aa)). 53-60 (AQTGTGKT) serves as a coordination point for ATP. Residues 166-169 (DEAD) carry the DEAD box motif. Positions 243–393 (DKYKLLYNLV…MPPAELLKPV (151 aa)) constitute a Helicase C-terminal domain.

Belongs to the DEAD box helicase family. RhlB subfamily. As to quaternary structure, component of the RNA degradosome, which is a multiprotein complex involved in RNA processing and mRNA degradation.

The protein localises to the cytoplasm. It catalyses the reaction ATP + H2O = ADP + phosphate + H(+). DEAD-box RNA helicase involved in RNA degradation. Has RNA-dependent ATPase activity and unwinds double-stranded RNA. The polypeptide is ATP-dependent RNA helicase RhlB (Pseudomonas aeruginosa (strain UCBPP-PA14)).